The primary structure comprises 157 residues: Homeobox protein DBX2 (157 aa).

Positions 9–68 (GILRRAVFSEDQRKALEKMFQKQKYISKTDRKKLAINLGLKESQVKIWFQNRRMKWRNSK) form a DNA-binding region, homeobox. Positions 105-157 (SQEQTSPRWKEKSPGNSERLTSTQPPPRANSSQSPLYLYPDHDTANKAVTSSD) are disordered. Over residues 118-139 (PGNSERLTSTQPPPRANSSQSP) the composition is skewed to polar residues.

Belongs to the H2.0 homeobox family. Localized to the central nervous system during embryogenesis. It is found restricted to the rostro-caudal and dorso-ventral regions of the hindbrain. In the ventricular zone of the spinal cord, it localizes to the dorsal part of the basal plate. In the adult, it is detected in ovary.

It is found in the nucleus. Its function is as follows. Appears to perform a very early function in establishing the identity of a subset of cells that originate in the region of the ventricular zone in the developing spinal cord and in the hindbrain. In Gallus gallus (Chicken), this protein is Homeobox protein DBX2 (DBX2).